We begin with the raw amino-acid sequence, 369 residues long: Septin-5 (369 aa).

Position 13 is a phosphothreonine (threonine 13). The Septin-type G domain maps to 41–314; sequence KGFDFTLMVA…ENYRAHCIQQ (274 aa). The segment at 51 to 58 is G1 motif; that stretch reads GESGLGKS. GTP is bound by residues 51–58, threonine 85, and glycine 111; that span reads GESGLGKS. Residues 108-111 are G3 motif; the sequence is DTPG. Arginine 168 is subject to Omega-N-methylarginine. Residues 189-192 form a G4 motif region; it reads AKAD. 190 to 198 provides a ligand contact to GTP; it reads KADCLVPSE. Position 225 is a phosphoserine (serine 225). Glycine 248 and arginine 263 together coordinate GTP. The residue at position 327 (serine 327) is a Phosphoserine. At threonine 336 the chain carries Phosphothreonine. Residues 338 to 369 are a coiled coil; that stretch reads DSETEKLIRMKDEELRRMQEMLQKMKQRMQDQ.

This sequence belongs to the TRAFAC class TrmE-Era-EngA-EngB-Septin-like GTPase superfamily. Septin GTPase family. In terms of assembly, septins polymerize into heterooligomeric protein complexes that form filaments, and can associate with cellular membranes, actin filaments and microtubules. GTPase activity is required for filament formation. Interacts with SEPTIN2 and SEPTIN5. In platelets, associated with a complex containing STX4. Interacts with PRKN; this interaction leads to SEPTIN5 ubiquitination and degradation. Interacts with DYRK1A. Interacts with STX1A; in the cerebellar cortex. Phosphorylated by DYRK1A. Expressed in brain and testis and at lower level in heart, spleen, lung and kidney.

It localises to the cytoplasm. The protein localises to the cytoskeleton. In terms of biological role, filament-forming cytoskeletal GTPase. May play a role in cytokinesis (Potential). May play a role in platelet secretion. The polypeptide is Septin-5 (Rattus norvegicus (Rat)).